Consider the following 417-residue polypeptide: Glutamyl-tRNA(Gln) amidotransferase subunit D (417 aa).

Residues 73 to 400 (EKVWLLATGG…EEVPRVLTTP (328 aa)) enclose the Asparaginase/glutaminase domain. Active-site residues include T83, T157, D158, and K236.

It belongs to the asparaginase 1 family. GatD subfamily. Heterodimer of GatD and GatE.

The enzyme catalyses L-glutamyl-tRNA(Gln) + L-glutamine + ATP + H2O = L-glutaminyl-tRNA(Gln) + L-glutamate + ADP + phosphate + H(+). Its function is as follows. Allows the formation of correctly charged Gln-tRNA(Gln) through the transamidation of misacylated Glu-tRNA(Gln) in organisms which lack glutaminyl-tRNA synthetase. The reaction takes place in the presence of glutamine and ATP through an activated gamma-phospho-Glu-tRNA(Gln). The GatDE system is specific for glutamate and does not act on aspartate. This Pyrobaculum aerophilum (strain ATCC 51768 / DSM 7523 / JCM 9630 / CIP 104966 / NBRC 100827 / IM2) protein is Glutamyl-tRNA(Gln) amidotransferase subunit D.